Consider the following 95-residue polypeptide: MSVSKKDVEYVAELARLEFKEEEKDNFVNDLNKILNYMEKLDELNTDDVDIVVNPYYIENKYREDNVEKSMELKEVIDNAPESLEEYVIVPKVID.

The protein belongs to the GatC family. As to quaternary structure, heterotrimer of A, B and C subunits.

It catalyses the reaction L-glutamyl-tRNA(Gln) + L-glutamine + ATP + H2O = L-glutaminyl-tRNA(Gln) + L-glutamate + ADP + phosphate + H(+). The enzyme catalyses L-aspartyl-tRNA(Asn) + L-glutamine + ATP + H2O = L-asparaginyl-tRNA(Asn) + L-glutamate + ADP + phosphate + 2 H(+). In terms of biological role, allows the formation of correctly charged Asn-tRNA(Asn) or Gln-tRNA(Gln) through the transamidation of misacylated Asp-tRNA(Asn) or Glu-tRNA(Gln) in organisms which lack either or both of asparaginyl-tRNA or glutaminyl-tRNA synthetases. The reaction takes place in the presence of glutamine and ATP through an activated phospho-Asp-tRNA(Asn) or phospho-Glu-tRNA(Gln). In Clostridium botulinum (strain 657 / Type Ba4), this protein is Aspartyl/glutamyl-tRNA(Asn/Gln) amidotransferase subunit C.